A 450-amino-acid chain; its full sequence is MSHSACPKPATARHSQALTGEIRIPGDKSISHRSFMFGGLASGKTRITGLLEGEDVINTGRAMQAMGARIRKEGDVWIINGVGNGCLLQPEAPLDFGNAGTGARLTMGLVGTYDMKTSFIGDASLSKRPMGRVLNPLREMGVQVEAAEGDRMPLTLIGPRTANPIAYRVPMASAQVKSAVLLAGLNTPGVTTVIEPVMTRDHTEKMLQGFGADLTVETDKDGVRHIRIVGQGKLTGQTIDVPGDPSSTAFPLVAALLVEGSDVTIRNVLMNPTRTGLILTLQEMGADIEIIDPRLAGGEDVADLRVKASKLKGVVVPPERAPSMIDEYPVLAIAASFAEGETVMDGLDELRVKESDRLAAVARGLEANGVDCTEGEMSLTVRGRPGGKGLGGGTVGTHLDHRIAMSFLVMGLASEKPVTVDDSTMIATSFPEFMGMMAGLGAKIAESGAE.

The 3-phosphoshikimate site is built by K28, S29, and R33. K28 contributes to the phosphoenolpyruvate binding site. Residues G100 and R128 each contribute to the phosphoenolpyruvate site. Positions 173, 175, 326, and 353 each coordinate 3-phosphoshikimate. Q175 is a binding site for phosphoenolpyruvate. Residue D326 is the Proton acceptor of the active site. Phosphoenolpyruvate contacts are provided by R357 and R402.

Belongs to the EPSP synthase family. In terms of assembly, monomer.

It is found in the cytoplasm. The enzyme catalyses 3-phosphoshikimate + phosphoenolpyruvate = 5-O-(1-carboxyvinyl)-3-phosphoshikimate + phosphate. It functions in the pathway metabolic intermediate biosynthesis; chorismate biosynthesis; chorismate from D-erythrose 4-phosphate and phosphoenolpyruvate: step 6/7. Its function is as follows. Catalyzes the transfer of the enolpyruvyl moiety of phosphoenolpyruvate (PEP) to the 5-hydroxyl of shikimate-3-phosphate (S3P) to produce enolpyruvyl shikimate-3-phosphate and inorganic phosphate. This chain is 3-phosphoshikimate 1-carboxyvinyltransferase, found in Brucella melitensis biotype 1 (strain ATCC 23456 / CCUG 17765 / NCTC 10094 / 16M).